The following is a 4650-amino-acid chain: Nonribosomal peptide synthetase lenA (4650 aa).

Positions 227-628 (GSILDTIRAK…DGSVIHVGRK (402 aa)) are adenylation 1. One can recognise a Carrier 1 domain in the interval 773–849 (PPETVLEKAL…KLAQYLRNTE (77 aa)). Residue serine 810 is modified to O-(pantetheine 4'-phosphoryl)serine. The condensation 1 stretch occupies residues 890–1212 (EDCYPCTALQ…CDFQSQLIFQ (323 aa)). The interval 1288–1622 (ELELNAQKEP…RKIRPGYLGR (335 aa)) is adenylation 2. Residues 1745–1822 (PPVSAAEKKW…EIAALSETRD (78 aa)) form the Carrier 2 domain. Residue serine 1782 is modified to O-(pantetheine 4'-phosphoryl)serine. The segment at 1850–2110 (ATNLIAATVH…GEKTRPGGGA (261 aa)) is condensation 2. The interval 2183–2511 (RCVHDLVHDA…RTGDLIKLRG (329 aa)) is adenylation 3. The Carrier 3 domain occupies 2630–2708 (APQNRLQHDI…EADVGLDHAS (79 aa)). An O-(pantetheine 4'-phosphoryl)serine modification is found at serine 2667. The interval 2722 to 2998 (ESMARALAVI…KDARRRSPAN (277 aa)) is epimerase. The interval 3128–3565 (VQDVYPCTPI…VDDSQRQQIL (438 aa)) is condensation 3. Residues 3578-3980 (CVHHIIHQRC…FVGRKDNQIK (403 aa)) form an adenylation 4 region. The 77-residue stretch at 4114-4190 (TPSTPLEAQL…QLAAVLEEGA (77 aa)) folds into the Carrier 4 domain. Serine 4151 is modified (O-(pantetheine 4'-phosphoryl)serine). Residues 4249–4648 (HMVLTFSQPV…TTTPEKLVAE (400 aa)) form a condensation 4 region.

It belongs to the NRP synthetase family. Pantetheine 4'-phosphate serves as cofactor.

It participates in alkaloid biosynthesis. Its function is as follows. Nonribosomal peptide synthetase; part of the gene cluster that mediates the biosynthesis of the ergot alkaloids lentopeptins A and B. Within the pathway, lenA catalyzes the biosynthesis of the Ala-Val-Ala peptide chain, including a cinnamic acid moiety as the starting unit. The release of the peptide from the enzyme is accomplished via a cyclization reaction catalyzed by the terminal condensation-like (Ct) domain of lenA to form the N-acyldiketopiperazine intermediate. The reaction appears to proceed through a nucleophilic attack on the carbonyl carbon by a lone electron pair of the valine amide nitrogen. The phenylalanine ammonia-lyase lenB provides the starter unit for the synthesis of the N-acyldiketopiperazine intermediate by the NRPS lenA, while the cytochrome P450 monooxygenase lenC is involved in the post-NRPS oxidative modification steps to form lentopeptins A and B. This Aspergillus lentulus protein is Nonribosomal peptide synthetase lenA.